A 275-amino-acid chain; its full sequence is Light-independent protochlorophyllide reductase iron-sulfur ATP-binding protein (275 aa).

ATP-binding positions include 12-17 and lysine 41; that span reads GIGKST. Residue serine 16 participates in Mg(2+) binding. [4Fe-4S] cluster contacts are provided by cysteine 97 and cysteine 131. 182–183 is a binding site for ATP; sequence NR.

This sequence belongs to the NifH/BchL/ChlL family. In terms of assembly, homodimer. Protochlorophyllide reductase is composed of three subunits; BchL, BchN and BchB. The cofactor is [4Fe-4S] cluster.

It catalyses the reaction chlorophyllide a + oxidized 2[4Fe-4S]-[ferredoxin] + 2 ADP + 2 phosphate = protochlorophyllide a + reduced 2[4Fe-4S]-[ferredoxin] + 2 ATP + 2 H2O. It participates in porphyrin-containing compound metabolism; bacteriochlorophyll biosynthesis (light-independent). Its function is as follows. Component of the dark-operative protochlorophyllide reductase (DPOR) that uses Mg-ATP and reduced ferredoxin to reduce ring D of protochlorophyllide (Pchlide) to form chlorophyllide a (Chlide). This reaction is light-independent. The L component serves as a unique electron donor to the NB-component of the complex, and binds Mg-ATP. The sequence is that of Light-independent protochlorophyllide reductase iron-sulfur ATP-binding protein from Chlorobium phaeobacteroides (strain BS1).